The chain runs to 244 residues: Methylthioribulose-1-phosphate dehydratase (244 aa).

Residue C104 coordinates substrate. Zn(2+)-binding residues include H122 and H124. E148 serves as the catalytic Proton donor/acceptor. Residue H204 coordinates Zn(2+).

The protein belongs to the aldolase class II family. MtnB subfamily. Requires Zn(2+) as cofactor.

Its subcellular location is the cytoplasm. It catalyses the reaction 5-(methylsulfanyl)-D-ribulose 1-phosphate = 5-methylsulfanyl-2,3-dioxopentyl phosphate + H2O. It participates in amino-acid biosynthesis; L-methionine biosynthesis via salvage pathway; L-methionine from S-methyl-5-thio-alpha-D-ribose 1-phosphate: step 2/6. Catalyzes the dehydration of methylthioribulose-1-phosphate (MTRu-1-P) into 2,3-diketo-5-methylthiopentyl-1-phosphate (DK-MTP-1-P). The sequence is that of Methylthioribulose-1-phosphate dehydratase from Cryptococcus neoformans var. neoformans serotype D (strain B-3501A) (Filobasidiella neoformans).